Consider the following 175-residue polypeptide: 3-hydroxydecanoyl-[acyl-carrier-protein] dehydratase (175 aa).

Residue histidine 71 is part of the active site.

The protein belongs to the thioester dehydratase family. FabA subfamily. As to quaternary structure, homodimer.

Its subcellular location is the cytoplasm. The enzyme catalyses a (3R)-hydroxyacyl-[ACP] = a (2E)-enoyl-[ACP] + H2O. It carries out the reaction (3R)-hydroxydecanoyl-[ACP] = (2E)-decenoyl-[ACP] + H2O. It catalyses the reaction (2E)-decenoyl-[ACP] = (3Z)-decenoyl-[ACP]. The protein operates within lipid metabolism; fatty acid biosynthesis. Necessary for the introduction of cis unsaturation into fatty acids. Catalyzes the dehydration of (3R)-3-hydroxydecanoyl-ACP to E-(2)-decenoyl-ACP and then its isomerization to Z-(3)-decenoyl-ACP. Can catalyze the dehydratase reaction for beta-hydroxyacyl-ACPs with saturated chain lengths up to 16:0, being most active on intermediate chain length. The chain is 3-hydroxydecanoyl-[acyl-carrier-protein] dehydratase from Rhodopseudomonas palustris (strain ATCC BAA-98 / CGA009).